Here is a 583-residue protein sequence, read N- to C-terminus: Sensor protein SrrB (583 aa).

At 1 to 11 the chain is on the cytoplasmic side; the sequence is MMSRLNSVVIK. A helical membrane pass occupies residues 12-32; that stretch reads LWLTIILIVTTVLILLSIALI. The Extracellular portion of the chain corresponds to 33-174; that stretch reads TFMQYYFTQE…SIEDTNNAIT (142 aa). The helical transmembrane segment at 175–195 threads the bilayer; that stretch reads IITIITAVIFLTITTVFAFFL. Topologically, residues 196–583 are cytoplasmic; sequence SSRITKPLRR…TFIIKLPKPE (388 aa). Positions 197–249 constitute an HAMP domain; sequence SRITKPLRRLRDQATRVSEGDYSYKPSVTTKDEIGQLSQAFNQMSTEIEEHVD. Residues 366-583 enclose the Histidine kinase domain; sequence NVSHELRTPI…TFIIKLPKPE (218 aa). The residue at position 369 (H369) is a Phosphohistidine; by autocatalysis.

It is found in the cell membrane. The enzyme catalyses ATP + protein L-histidine = ADP + protein N-phospho-L-histidine.. Its function is as follows. Member of the two-component regulatory system SrrA/SrrB, which is involved in the global regulation of staphylococcal virulence factors in response to environmental oxygen levels as well as biofilm formation. Also plays an essential role in host-derived nitric oxide resistance by regulating hmp/flavohemoglobin, an enzyme that detoxifies nitric oxide by converting it to nitrate. Functions as a sensor protein kinase which is autophosphorylated at a histidine residue and transfers its phosphate group to SrrA. In turn, SrrA binds to the upstream promoter regions of the target genes to positively and negatively regulate their expression. This chain is Sensor protein SrrB (srrB), found in Staphylococcus aureus.